A 393-amino-acid polypeptide reads, in one-letter code: Synaptic vesicle membrane protein VAT-1 homolog (393 aa).

A disordered region spans residues 1–40 (MSDEREVAEAATGEDASSPPPKTEAASDPQHPAASEGAAA). Ser2 bears the N-acetylserine mark. 5 positions are modified to phosphoserine: Ser2, Ser18, Ser27, Ser35, and Ser44.

It belongs to the zinc-containing alcohol dehydrogenase family. Quinone oxidoreductase subfamily. In terms of tissue distribution, expressed in brain. Also expressed in glioblastoma cells.

Its subcellular location is the cytoplasm. It is found in the mitochondrion outer membrane. Possesses ATPase activity. Plays a part in calcium-regulated keratinocyte activation in epidermal repair mechanisms. Has no effect on cell proliferation. Negatively regulates mitochondrial fusion in cooperation with mitofusin proteins (MFN1-2). In Homo sapiens (Human), this protein is Synaptic vesicle membrane protein VAT-1 homolog (VAT1).